Consider the following 194-residue polypeptide: Peptidyl-tRNA hydrolase (194 aa).

Residue Tyr-17 coordinates tRNA. The active-site Proton acceptor is the His-22. Positions 68, 70, and 116 each coordinate tRNA.

This sequence belongs to the PTH family. As to quaternary structure, monomer.

It is found in the cytoplasm. It catalyses the reaction an N-acyl-L-alpha-aminoacyl-tRNA + H2O = an N-acyl-L-amino acid + a tRNA + H(+). Hydrolyzes ribosome-free peptidyl-tRNAs (with 1 or more amino acids incorporated), which drop off the ribosome during protein synthesis, or as a result of ribosome stalling. Its function is as follows. Catalyzes the release of premature peptidyl moieties from peptidyl-tRNA molecules trapped in stalled 50S ribosomal subunits, and thus maintains levels of free tRNAs and 50S ribosomes. In Pseudomonas savastanoi pv. phaseolicola (strain 1448A / Race 6) (Pseudomonas syringae pv. phaseolicola (strain 1448A / Race 6)), this protein is Peptidyl-tRNA hydrolase.